We begin with the raw amino-acid sequence, 231 residues long: MAAAEMERTMSFDAAEKLKAADGGGGEVDDELEEGEIVEESNDTASYLGKEITVKHPLEHSWTFWFDNPTTKSRQTAWGSSLRNVYTFSTVEDFWGAYNNIHHPSKLIMGADFHCFKHKIEPKWEDPVCANGGTWKMSFSKGKSDTSWLYTLLAMIGHQFDHGDEICGAVVSVRAKGEKIALWTKNAANETAQVSIGKQWKQFLDYSDSVGFIFHDDAKRLDRNAKNRYTV.

2 EIF4G-binding regions span residues 56-59 (HPLE) and 66-102 (FDNP…NNIH). MRNA is bound by residues 74–79 (RQTAWG), Lys-106, and 124–125 (WE). The cysteines at positions 129 and 167 are disulfide-linked. Residues 150–159 (YTLLAMIGHQ) are EIF4G-binding. Residues 174–179 (RAKGEK) and 219–223 (KRLDR) each bind mRNA.

The protein belongs to the eukaryotic initiation factor 4E family. As to quaternary structure, EIF4F is a multi-subunit complex, the composition of which varies with external and internal environmental conditions. It is composed of at least EIF4A, EIF4E and EIF4G. EIF4E is also known to interact with other partners. In higher plants two isoforms of EIF4F have been identified, named isoform EIF4F and isoform EIF(iso)4F. Isoform EIF4F has subunits p220 and p26, whereas isoform EIF(iso)4F has subunits p82 and p28. In terms of assembly, (Microbial infection) Interacts with potyvirus viral genome-linked protein (VPg); mostly with tobacco etch virus (TEV-HAT) VPg and, to a lower extent, with potato virus Y (PVY-LYE84 and PVY-LYE90) and pepper mottle virus (PepMoV) VPg. Post-translationally, according to the redox status, the Cys-129-Cys-167 disulfide bridge may have a role in regulating protein function by affecting its ability to bind capped mRNA.

The protein localises to the nucleus. Its subcellular location is the cytoplasm. Its function is as follows. Component of the protein complex eIF4F, which is involved in the recognition of the mRNA cap, ATP-dependent unwinding of 5'-terminal secondary structure and recruitment of mRNA to the ribosome. Recognizes and binds the 7-methylguanosine-containing mRNA cap during an early step in the initiation of protein synthesis and facilitates ribosome binding by inducing the unwinding of the mRNAs secondary structures. Key component of recessive resistance to potyviruses. (Microbial infection) Susceptibility host factor required for viral infection (e.g. potato virus Y (PVY), pepper mottle virus (PepMoV) and tobacco etch virus (TEV)) by recruiting viral RNAs to the host ribosomal complex via an interaction with viral genome-linked protein (VPg). The polypeptide is Eukaryotic translation initiation factor 4E-1 (Solanum lycopersicum (Tomato)).